A 532-amino-acid chain; its full sequence is Tyrosinase (532 aa).

The first 22 residues, 1 to 22, serve as a signal peptide directing secretion; the sequence is MESTTVLLAASTLLLVLHASYG. Topologically, residues 23-479 are lumenal, melanosome; it reads QFPRACSTAQ…LEQARQIWQW (457 aa). Asn-90, Asn-115, and Asn-165 each carry an N-linked (GlcNAc...) asparagine glycan. Cu cation-binding residues include His-184, His-206, and His-215. N-linked (GlcNAc...) asparagine glycans are attached at residues Asn-234 and Asn-341. Residues His-367 and His-371 each coordinate Cu cation. N-linked (GlcNAc...) asparagine glycosylation is present at Asn-375. His-394 contacts Cu cation. A helical membrane pass occupies residues 480–500; it reads LLGAAVVGGLVTAVIATIISL. The Cytoplasmic segment spans residues 501–532; it reads TCRRKRRTKTSEETRPLLMEAEDYHATYQSNL.

This sequence belongs to the tyrosinase family. Active tyrosinase has been found as a homodimer and homotetramer. Cu(2+) serves as cofactor. Frog skin.

Its subcellular location is the melanosome membrane. It carries out the reaction 2 L-dopa + O2 = 2 L-dopaquinone + 2 H2O. The enzyme catalyses L-tyrosine + O2 = L-dopaquinone + H2O. Its activity is regulated as follows. Activated by trypsin, chymotrypsin and subtilisin. Activated by alpha-chymotrypsin, thermolysin and Pronase. Inhibited by its product L-DOPA and tyrosine. Its function is as follows. This is a copper-containing oxidase that functions in the formation of pigments such as melanins and other polyphenolic compounds. Catalyzes the initial and rate limiting step in the cascade of reactions leading to melanin production from tyrosine. In addition to hydroxylating tyrosine to DOPA (3,4-dihydroxyphenylalanine), also catalyzes the oxidation of DOPA to DOPA-quinone. In Pelophylax lessonae (Pool frog), this protein is Tyrosinase.